Reading from the N-terminus, the 287-residue chain is ATP synthase gamma chain (287 aa).

The protein belongs to the ATPase gamma chain family. As to quaternary structure, F-type ATPases have 2 components, CF(1) - the catalytic core - and CF(0) - the membrane proton channel. CF(1) has five subunits: alpha(3), beta(3), gamma(1), delta(1), epsilon(1). CF(0) has three main subunits: a, b and c.

The protein localises to the cell inner membrane. Produces ATP from ADP in the presence of a proton gradient across the membrane. The gamma chain is believed to be important in regulating ATPase activity and the flow of protons through the CF(0) complex. The sequence is that of ATP synthase gamma chain from Ruthia magnifica subsp. Calyptogena magnifica.